The primary structure comprises 45 residues: Omega-hexatoxin-Hv2a (45 aa).

3 disulfide bridges follow: C4–C18, C11–C24, and C17–C29.

The protein belongs to the neurotoxin 15 family. 02 (omega-actx) subfamily. As to expression, expressed by the venom gland.

The protein localises to the secreted. In terms of biological role, potent inhibitor of insect (bee brain), but not mammalian (rat trigeminal neurons), voltage-gated calcium channels (Cav). In vivo, injection into lone star ticks (Amblyomma americanum) induces curling of all eight legs into closed loops, followed by death. This Hadronyche versuta (Blue mountains funnel-web spider) protein is Omega-hexatoxin-Hv2a.